The sequence spans 103 residues: MKIRKGDTVIVISGPDKGAKGKVIEAYPKRDKVLVEGVNRIKKHVANSAPERGAESGGIVTQEAPIHVSNVMVIDSDGNPTRIGYRFEDGKKIRVSKRNGKDI.

Belongs to the universal ribosomal protein uL24 family. Part of the 50S ribosomal subunit.

Functionally, one of two assembly initiator proteins, it binds directly to the 5'-end of the 23S rRNA, where it nucleates assembly of the 50S subunit. In terms of biological role, one of the proteins that surrounds the polypeptide exit tunnel on the outside of the subunit. In Corynebacterium urealyticum (strain ATCC 43042 / DSM 7109), this protein is Large ribosomal subunit protein uL24.